The primary structure comprises 776 residues: Cilium assembly protein DZIP1L (776 aa).

A C2H2-type zinc finger spans residues 166–189 (HTCHLCDKTFMNATFLRGHIQRRH). The stretch at 196 to 450 (GKQKQEQQLG…RKVLAALRNN (255 aa)) forms a coiled coil. Phosphoserine occurs at positions 425 and 426. The segment at 520-776 (SRAKKRWEGT…SGSRPRIPGW (257 aa)) is disordered. The span at 600 to 618 (GPSSTPVSPGPGLSTPPFS) shows a compositional bias: low complexity. Residues 652 to 683 (WSDSETSEESAQSPGKGSDGLASSATLVQSMV) are compositionally biased toward polar residues. Basic and acidic residues predominate over residues 685–694 (NLEKQLETPA). The segment covering 709 to 721 (TALQRSSTPARKT) has biased composition (polar residues).

The protein belongs to the DZIP C2H2-type zinc-finger protein family. Interacts with SEPTIN2.

The protein localises to the cytoplasm. The protein resides in the cytoskeleton. Its subcellular location is the cilium basal body. It is found in the microtubule organizing center. It localises to the centrosome. The protein localises to the centriole. Involved in primary cilium formation. Probably acts as a transition zone protein required for localization of PKD1/PC1 and PKD2/PC2 to the ciliary membrane. In Rattus norvegicus (Rat), this protein is Cilium assembly protein DZIP1L.